The chain runs to 748 residues: Catalase-peroxidase 2 (748 aa).

The span at 1-24 shows a compositional bias: polar residues; that stretch reads MSSDTSDSRPPNPDTKTASTSESE. The disordered stretch occupies residues 1-43; the sequence is MSSDTSDSRPPNPDTKTASTSESENPAIPSPKPKSGAPLRNQD. The tryptophyl-tyrosyl-methioninium (Trp-Tyr) (with M-264) cross-link spans 113–238; sequence WHSAGTYRIH…YGATTMGLIY (126 aa). His114 acts as the Proton acceptor in catalysis. The tryptophyl-tyrosyl-methioninium (Tyr-Met) (with W-113) cross-link spans 238 to 264; sequence YVNPEGPEGQPDPLAAAHDIRETFGRM. His279 contributes to the heme b binding site.

It belongs to the peroxidase family. Peroxidase/catalase subfamily. As to quaternary structure, homotetramer. Heme b is required as a cofactor. Post-translationally, formation of the three residue Trp-Tyr-Met cross-link is important for the catalase, but not the peroxidase activity of the enzyme.

It catalyses the reaction H2O2 + AH2 = A + 2 H2O. It carries out the reaction 2 H2O2 = O2 + 2 H2O. In terms of biological role, bifunctional enzyme with both catalase and broad-spectrum peroxidase activity. May play a role in the intracellular survival of mycobacteria. This Mycolicibacterium smegmatis (strain ATCC 700084 / mc(2)155) (Mycobacterium smegmatis) protein is Catalase-peroxidase 2.